A 130-amino-acid chain; its full sequence is Large-conductance mechanosensitive channel (130 aa).

Transmembrane regions (helical) follow at residues 11–31 (FALK…AAFG) and 70–90 (GAFI…FIFV).

It belongs to the MscL family. In terms of assembly, homopentamer.

Its subcellular location is the cell membrane. In terms of biological role, channel that opens in response to stretch forces in the membrane lipid bilayer. May participate in the regulation of osmotic pressure changes within the cell. The chain is Large-conductance mechanosensitive channel from Listeria welshimeri serovar 6b (strain ATCC 35897 / DSM 20650 / CCUG 15529 / CIP 8149 / NCTC 11857 / SLCC 5334 / V8).